A 471-amino-acid chain; its full sequence is Glutamate--tRNA ligase 1 (471 aa).

Residues 15–25 (PSPTGYLHIGG) carry the 'HIGH' region motif. Residues 243–247 (KLSKR) carry the 'KMSKS' region motif. Residue Lys-246 participates in ATP binding.

This sequence belongs to the class-I aminoacyl-tRNA synthetase family. Glutamate--tRNA ligase type 1 subfamily. Monomer.

It localises to the cytoplasm. The enzyme catalyses tRNA(Glu) + L-glutamate + ATP = L-glutamyl-tRNA(Glu) + AMP + diphosphate. Functionally, catalyzes the attachment of glutamate to tRNA(Glu) in a two-step reaction: glutamate is first activated by ATP to form Glu-AMP and then transferred to the acceptor end of tRNA(Glu). This Dinoroseobacter shibae (strain DSM 16493 / NCIMB 14021 / DFL 12) protein is Glutamate--tRNA ligase 1.